We begin with the raw amino-acid sequence, 558 residues long: Membrane transporter D2 (558 aa).

Residues 1-28 (MTLKKRSSAPELPTSLDEDEEEDSPQPL) are disordered. Over 1 to 38 (MTLKKRSSAPELPTSLDEDEEEDSPQPLSNTPFFSMKN) the chain is Cytoplasmic. Residues 39 to 59 (LIVATPIILTPLLYGYNLGFV) traverse the membrane as a helical segment. Topologically, residues 60–152 (GPYSTMYGYA…QVGYSSIQSG (93 aa)) are extracellular. Residues 153 to 173 (VFAGSLVIGSTMGALMGGYLT) traverse the membrane as a helical segment. The Cytoplasmic portion of the chain corresponds to 174-179 (KRLDYC). The helical transmembrane segment at 180–200 (KSFLFIGLLSVIGNVLTHVAT) threads the bilayer. Topologically, residues 201 to 204 (GLFH) are extracellular. A helical transmembrane segment spans residues 205 to 225 (YWVLFVARIVLGFPLGWQSIT). The Cytoplasmic portion of the chain corresponds to 226–241 (SSHYTDKFAPANHAKT). A helical membrane pass occupies residues 242–262 (LGTLFQVSVSTGIFVTSFFGL). Over 263 to 281 (VLGNTIQYDAASNANTMGR) the chain is Extracellular. The chain crosses the membrane as a helical span at residues 282–302 (MQGLVSVSTLLSIFVVFLPLI). The Cytoplasmic portion of the chain corresponds to 303 to 335 (TKDGYSKSRRGDYEGENSEDASRKAAEEYTMTQ). The helical transmembrane segment at 336–356 (MIGPILNGVAMGCVTQLTGIN) threads the bilayer. Residues 357-373 (ANMNFAPTIMSNLGLQP) lie on the Extracellular side of the membrane. A helical transmembrane segment spans residues 374–394 (LVGNIIVMAWNMLATFCVIPL). Residues 395-402 (SRRFSMRT) lie on the Cytoplasmic side of the membrane. A helical membrane pass occupies residues 403-423 (LFLFCGFVGSLCCVFLGGIPV). Topologically, residues 424 to 441 (YPGVTKSDKAISGIAITG) are extracellular. Residues 442–463 (IAIFIALYEMGVGPCFYVLAVD) traverse the membrane as a helical segment. Over 464 to 478 (VFPESFRPIGSSITV) the chain is Cytoplasmic. The helical transmembrane segment at 479 to 499 (GVMFIFNLIINICYPIATEGI) threads the bilayer. Residues 500-512 (SGGPSGNPNKGQA) are Extracellular-facing. The helical transmembrane segment at 513-533 (VAFIFFGCIGVVACVIEYFFL) threads the bilayer. Topologically, residues 534-558 (QPWVEPEAKMTDDLDGAAVPEGKHD) are cytoplasmic.

This sequence belongs to the major facilitator superfamily. Sugar transporter (TC 2.A.1.1) family.

Its subcellular location is the membrane. In Leishmania donovani, this protein is Membrane transporter D2.